The following is a 684-amino-acid chain: Poly(A) RNA polymerase cid14 (684 aa).

3 disordered regions span residues 1–52 (MGKK…DAYD), 64–127 (DQEE…KRGE), and 161–219 (WNSD…QAYE). Basic and acidic residues-rich tracts occupy residues 19 to 35 (ERTE…DKPS), 73 to 91 (GSKK…DKGG), 108 to 127 (DPLE…KRGE), 171 to 186 (SNDK…KSSK), and 199 to 210 (FFHEANEKSDSN). Residues Asp298 and Asp300 each contribute to the Mg(2+) site. Gly364, Lys389, Ser407, Tyr408, Asn492, and Lys496 together coordinate ATP. The PAP-associated domain occupies 434–492 (NFGVLLLEFLELYGKQFYYDAVGIAVHNGGFYFSKKKMGWLKPNQPYLLSIQDPVDFQN). The tract at residues 623–684 (GHENFQKQAL…SRAKKIRKRF (62 aa)) is disordered. Over residues 628–655 (QKQALTSTGEQSSSNSRANPSKLFNISS) the composition is skewed to polar residues. Residues 656–672 (DDSEDEVPIIEDTTASD) show a composition bias toward acidic residues.

It belongs to the DNA polymerase type-B-like family. Heterooligomer. Component of the TRAMP complex composed of at least cid14, mtr4, and air1. Mg(2+) is required as a cofactor. It depends on Mn(2+) as a cofactor.

The protein resides in the nucleus. It is found in the nucleolus. The enzyme catalyses RNA(n) + ATP = RNA(n)-3'-adenine ribonucleotide + diphosphate. Functionally, required for 3' polyadenylation of the 5.8S and 25S rRNAs as a prelude to their degradation in the exosome. Involved in the nucleolar organization to ensure faithful chromosome segregation during mitosis. The chain is Poly(A) RNA polymerase cid14 (cid14) from Schizosaccharomyces pombe (strain 972 / ATCC 24843) (Fission yeast).